Here is a 244-residue protein sequence, read N- to C-terminus: MVAFLFCNLLLVACGSVTWTMSDTGESGVDLADRLDLVEKIGDTHSKDLEIWMELGKQREADAREMHAVCRVQPSAMLPPDQPQITGLVLFRQLGPSSRLEASFNLEGFPAEQNTSNHAIHVHEFGDLSQGCESTGPHYNPLGVPHPQHPGDFGNFVVRDGRLWKHRMGLATSLAGPHSILGRAVVVHAGEDDLGKGGNQASVQNGNAGRRLACCVVGTSNSEAWESQTKERKKRRRESECKTT.

The signal sequence occupies residues 1 to 15 (MVAFLFCNLLLVACG). Intrachain disulfides connect Cys-70-Cys-215 and Cys-132-Cys-214. An N-linked (GlcNAc...) asparagine glycan is attached at Asn-114. Cu cation is bound by residues His-121, His-123, and His-138. The Zn(2+) site is built by His-138, His-146, His-149, and Asp-152. Position 188 (His-188) interacts with Cu cation. The disordered stretch occupies residues 224–244 (AWESQTKERKKRRRESECKTT).

This sequence belongs to the Cu-Zn superoxide dismutase family. As to quaternary structure, homodimer. Interacts with ATP7A; this interaction is copper-dependent and is required for SOD3 activity. Cu cation is required as a cofactor. Requires Zn(2+) as cofactor.

The protein localises to the secreted. It is found in the extracellular space. It localises to the golgi apparatus. Its subcellular location is the trans-Golgi network. It carries out the reaction 2 superoxide + 2 H(+) = H2O2 + O2. Functionally, protect the extracellular space from toxic effect of reactive oxygen intermediates by converting superoxide radicals into hydrogen peroxide and oxygen. The polypeptide is Extracellular superoxide dismutase [Cu-Zn] (Sod3) (Rattus norvegicus (Rat)).